Consider the following 202-residue polypeptide: P25 protein (202 aa).

One can recognise a Flavodoxin-like domain in the interval 7-195 (VAIVIYSTYG…EIARIQGETF (189 aa)). Ser-181 is subject to Phosphoserine.

Belongs to the WrbA family. In terms of assembly, homodimer.

Its function is as follows. Unknown. Target of pap1 transcription factor. Confers brefeldin A resistance in S.pombe. The protein is P25 protein (obr1) of Schizosaccharomyces pombe (strain 972 / ATCC 24843) (Fission yeast).